A 476-amino-acid chain; its full sequence is Ribulose bisphosphate carboxylase large chain (476 aa).

Residues Asn-124 and Thr-174 each contribute to the substrate site. The active-site Proton acceptor is Lys-176. Lys-178 contacts substrate. Mg(2+) contacts are provided by Lys-202, Asp-204, and Glu-205. N6-carboxylysine is present on Lys-202. His-295 functions as the Proton acceptor in the catalytic mechanism. The substrate site is built by Arg-296, His-328, and Ser-380.

The protein belongs to the RuBisCO large chain family. Type I subfamily. As to quaternary structure, heterohexadecamer of 8 large chains and 8 small chains; disulfide-linked. The disulfide link is formed within the large subunit homodimers. Requires Mg(2+) as cofactor. In terms of processing, the disulfide bond which can form in the large chain dimeric partners within the hexadecamer appears to be associated with oxidative stress and protein turnover.

It is found in the carboxysome. The catalysed reaction is 2 (2R)-3-phosphoglycerate + 2 H(+) = D-ribulose 1,5-bisphosphate + CO2 + H2O. It carries out the reaction D-ribulose 1,5-bisphosphate + O2 = 2-phosphoglycolate + (2R)-3-phosphoglycerate + 2 H(+). In terms of biological role, ruBisCO catalyzes two reactions: the carboxylation of D-ribulose 1,5-bisphosphate, the primary event in carbon dioxide fixation, as well as the oxidative fragmentation of the pentose substrate in the photorespiration process. Both reactions occur simultaneously and in competition at the same active site. The sequence is that of Ribulose bisphosphate carboxylase large chain from Trichormus variabilis (strain ATCC 29413 / PCC 7937) (Anabaena variabilis).